Reading from the N-terminus, the 563-residue chain is Efflux pump notK (563 aa).

Residues 1–32 (MTKDEDSGTTDGGYSTPDIAVQEKQDQPPAPE) are disordered. The next 14 helical transmembrane spans lie at 48 to 68 (IFLS…AIPG), 78 to 98 (DVGW…PMWG), 108 to 128 (LVYL…AAAP), 138 to 158 (ALQG…ISYV), 165 to 185 (AMLI…GPLL), 197 to 217 (WCFW…VLFF), 239 to 259 (LPGF…LQWG), 270 to 290 (VIAT…VEWI), 312 to 332 (LYGW…PIYF), 345 to 365 (VNSL…GFLI), 374 to 394 (YEFA…TLDI), 406 to 426 (VIFG…LESF), 438 to 458 (VMLM…QSIF), and 509 to 529 (VFAF…AIPF). Residues 538-563 (GPSNGQEEEEGKKDGPAEKKEDEVAV) form a disordered region. The segment covering 547 to 563 (EGKKDGPAEKKEDEVAV) has biased composition (basic and acidic residues).

It belongs to the major facilitator superfamily. TCR/Tet family.

Its subcellular location is the cell membrane. In terms of biological role, efflux pump; part of the gene cluster that mediates the biosynthesis of notoamide, a fungal indole alkaloid that belongs to a family of natural products containing a characteristic bicyclo[2.2.2]diazaoctane core. This Aspergillus sp. (strain MF297-2) protein is Efflux pump notK.